Here is a 203-residue protein sequence, read N- to C-terminus: Glycerol-3-phosphate acyltransferase (203 aa).

The next 5 helical transmembrane spans lie at 6-26, 56-76, 82-102, 118-138, and 141-161; these read LTLAMILTAYLAGSISSAVLV, AAAMVLLFDMLKGAVPAYVAF, AVSLGVIAIAACLGHIFPIFF, APIGADLSLALIATWVIVVLI, and YSSLAAIVTALLAPAYTWYFD.

The protein belongs to the PlsY family. In terms of assembly, probably interacts with PlsX.

It is found in the cell inner membrane. It carries out the reaction an acyl phosphate + sn-glycerol 3-phosphate = a 1-acyl-sn-glycero-3-phosphate + phosphate. Its pathway is lipid metabolism; phospholipid metabolism. Functionally, catalyzes the transfer of an acyl group from acyl-phosphate (acyl-PO(4)) to glycerol-3-phosphate (G3P) to form lysophosphatidic acid (LPA). This enzyme utilizes acyl-phosphate as fatty acyl donor, but not acyl-CoA or acyl-ACP. The chain is Glycerol-3-phosphate acyltransferase from Shewanella loihica (strain ATCC BAA-1088 / PV-4).